The sequence spans 1497 residues: Dual oxidase 1 (1497 aa).

An N-terminal signal peptide occupies residues 1-21 (MRSKHVLYIAILFSSIFGGKG). Residues 22 to 587 (IQQNEEFQRY…MQSTYWTDND (566 aa)) are Extracellular-facing. The segment at 26 to 590 (EEFQRYDGWY…TYWTDNDTTY (565 aa)) is peroxidase-like; mediates peroxidase activity. Asparagine 66, asparagine 305, asparagine 567, and asparagine 586 each carry an N-linked (GlcNAc...) asparagine glycan. Residues 588–608 (TTYVFTLIGLACVPLICYGIG) form a helical membrane-spanning segment. The Cytoplasmic portion of the chain corresponds to 609 to 986 (RYLVNRRIAI…VSAFLETYRQ (378 aa)). 2 EF-hand domains span residues 817–852 (ANNE…FVNA) and 853–888 (PQKQ…LNQT). Residues 987 to 1007 (HVFIVFCFVAINLVLFFERFW) form a helical membrane-spanning segment. Residues 1008-1024 (HYRYMAENRDLRRVMGA) lie on the Extracellular side of the membrane. Residues 1025–1045 (GIAITRGAAGALSFCMALILL) form a helical membrane-spanning segment. One can recognise a Ferric oxidoreductase domain in the interval 1030-1210 (RGAAGALSFC…FVIDRIIGLM (181 aa)). The Cytoplasmic portion of the chain corresponds to 1046–1068 (TVCRNIITLLRETVIAQYIPFDS). Residues 1069 to 1089 (AIAFHKIVALFAAFWATLHTV) traverse the membrane as a helical segment. Topologically, residues 1090–1134 (GHCVNFYHVGTQSQEGLACLFQEAFFGSNFLPSISYWFFSTITGL) are extracellular. A helical transmembrane segment spans residues 1135-1155 (TGIALVAVMCIIYVFALPCFI). Over 1156 to 1163 (KRAYHAFR) the chain is Cytoplasmic. The helical transmembrane segment at 1164–1184 (LTHLLNIAFYALTLLHGLPKL) threads the bilayer. Over 1185 to 1189 (LDSPK) the chain is Extracellular. Residues 1190–1210 (FGYYVVGPIVLFVIDRIIGLM) traverse the membrane as a helical segment. In terms of domain architecture, FAD-binding FR-type spans 1211 to 1318 (QYYKKLEIVN…KGPYGDGNQE (108 aa)). Topologically, residues 1211–1497 (QYYKKLEIVN…PSFAHRFETF (287 aa)) are cytoplasmic.

It in the N-terminal section; belongs to the peroxidase family. Interacts with doxa-1 and tsp-15. Interacts with rho-1. As to expression, expressed in hypodermal cells.

Its subcellular location is the membrane. The enzyme catalyses NADH + O2 + H(+) = H2O2 + NAD(+). It carries out the reaction NADPH + O2 + H(+) = H2O2 + NADP(+). With respect to regulation, peroxidase activity is inhibited by aminobenzohydrazide. Plays a role in cuticle biogenesis. In complex with doxa-1 and tsp-15, produces reactive oxygen species (ROS), which are probably used by mlt-7 for tyrosine cross-linking, thus stabilizing cuticular extracellular matrix. May regulate the production of ROS by playing a role in modulating proline catabolism. Required in combination with mlt-7 for correct formation of cross-links in cuticle collagens. Association with the GTPase rho-1 promotes ROS production and this interaction may be modulated by memo-1, in order to control the oxidative stress response and longevity. This chain is Dual oxidase 1, found in Caenorhabditis elegans.